Consider the following 97-residue polypeptide: Secreted LysM effector Mg1LysM (97 aa).

Residues 1–18 (MQFTALVAALLSVAAVQA) form the signal peptide. Residues 37–84 (QQYVARSGDTLTKIAQEIYHDVVGVCDIARANNLADPNRIDAGTPYTI) enclose the LysM domain. Residues Gly-44, Thr-48, Asn-74, and Ile-76 each coordinate chitin.

This sequence belongs to the secreted LysM effector family. As to quaternary structure, forms homodimers in a chitin-independent manner through interactions at the N-termini of Mg1LysM monomers. Homodimers are further polymerized in a chitin-dependent manner.

The protein resides in the secreted. The protein localises to the cell wall. In terms of biological role, secreted effector that enables the plant pathogenic fungus to manipulate host defenses for successful infection. Binds chitin but not cellulose or xylan. Chitin-induced polymerization of homodimers forms a contiguous Mg1LysM highly oligomeric super-complexe that is anchored to the chitin in the fungal cell wall to prevent hydrolysis by host chitinases. In Zymoseptoria tritici (strain ST99CH_3D7), this protein is Secreted LysM effector Mg1LysM.